Here is a 1121-residue protein sequence, read N- to C-terminus: MDALEDYVWPRATSELILLPVTGLECVGDRLLAGEGPDVLVYSLDFGGHLRMIKRVQNLLGHYLIHGFRIRPEPNGDLDLEAMVAVFGSKGLRVVKISWGQGHFRELWRSGLWNMSDWIWDARWLEGNIALALGHNSVVLYDPVVGCILQEVPCTDRCTLSSACLIGDAWKELTIVAGAVSNQLLVWYPATALADNKPVAPDRRISGHVGIIFSMSYLESKGLLATASEDRSVRIWKVGDLRVPGGRVQNIGHCFGHSARVWQVKLLENYLISAGEDCVCLVWSHEGEILQAFRGHQGRGIRAIAAHERQAWVITGGDDSGIRLWHLVGRGYRGLGVSALCFKSRSRPGTLKAVTLAGSWRLLAVTDTGALYLYDVEVKRWEQLLEDKHFQSYCLLEAAPGPEGFGLCAMANGEGRVKVVPINTPTAAVDRTLFPGKVHSLSWALRGYEELLLLASGPGGVVACLEISAAPSGKAIFVKERCRYLLPPSKQRWHTCSAFLPPGDFLVCSDRRGSVLLFPSRPGLLKDPGVGGKAGAGAGAPGVGSGSSGGGNAFTGLGPVSTLPSLHGKQGVTSVTCHGGYVYTTGRDGAYYQLFVRDSQLQPVLRQKSCRGMNWLAGLRIVPDGSMVILGFHANEFVVWNPRSHEKLHIVNCGGGHRSWAFSDTEAAMAFAYLKDGDVMLYRALGGCTRPHVILREGLHGREITCVKRVGTITLGPEYGVPSFMQPDDLEPGSEGPDLTDIVITCSEDTTVCVLALPTTTGSAHALTAVCNHISSVRAVAVWGIGTPGGPQDPQPGLSAHVVSAGGRAEMHCFSIMVTPDPSTPSRLACHVMHLSSHRLDEYWDRQHNRHRMVKVDPETRYMSLAVCELDQPSLGPLVAAACSDGAVRLFLLQDSGRILQLLAETFHHKRCVLKVHSFTHEVPNQRRRLLLCSAATDGSLAFWDLTTMLDHDSTVLEPPVDPGLPYRLGTPSLTLQAHSCGINSLHTLPTREGHHLVASGSEDGSLHVFVLAVEMLELEEAVGEAGLVPQLRVLEEYSVPCAHAAHVTGLKILSPSIMVSASIDQRLTFWRLGHGEPTFMNSTVFHVPDVADMDCWPVSPEFGHRCALGGQGLEVYNWYD.

The residue at position 1 (methionine 1) is an N-acetylmethionine. WD repeat units follow at residues 53 to 97 (IKRV…VVKI), 105 to 143 (RELW…LYDP), 147 to 189 (CILQ…VWYP), 200 to 238 (APDR…IWKV), 247 to 285 (RVQN…VWSH), 289 to 327 (ILQA…LWHL), 335 to 376 (LGVS…LYDV), 381 to 422 (WEQL…VVPI), 425 to 470 (PTAA…ISAA), 476 to 520 (IFVK…LFPS), 559 to 598 (PVST…FVRD), 604 to 642 (VLRQ…VWNP), 645 to 684 (HEKL…LYRA), 739 to 785 (LTDI…VWGI), 848 to 893 (HNRH…LFLL), 901 to 946 (QLLA…FWDL), 970 to 1012 (GTPS…VFVL), 1036 to 1073 (EEYS…FWRL), and 1079 to 1121 (TFMN…NWYD).

This sequence belongs to the WD repeat WDR6 family. In terms of assembly, interacts with FTSJ1; the interaction is direct, and required for 2'-O-methylation of position 34 in substrate tRNAs. Interacts with IRS4. Interacts with STK11/LKB1.

The protein resides in the cytoplasm. Its function is as follows. Together with methyltransferase FTSJ1, methylates the 2'-O-ribose of nucleotides at position 34 of the tRNA anticodon loop of substrate tRNAs. Required for the correct positioning of the substrate tRNA for methylation. Required to suppress amino acid starvation-induced autophagy. Enhances the STK11/LKB1-induced cell growth suppression activity. This Pongo abelii (Sumatran orangutan) protein is tRNA (34-2'-O)-methyltransferase regulator WDR6 (WDR6).